Here is a 107-residue protein sequence, read N- to C-terminus: Death-associated protein-like 1 (107 aa).

Residues 1-23 are disordered; the sequence is MANEVQDLLSPRKGGHPPAVKAG.

Expressed in hair follicle (at protein level).

May play a role in the early stages of epithelial differentiation or in apoptosis. The sequence is that of Death-associated protein-like 1 (DAPL1) from Homo sapiens (Human).